A 578-amino-acid polypeptide reads, in one-letter code: Proline--tRNA ligase (578 aa).

Belongs to the class-II aminoacyl-tRNA synthetase family. ProS type 1 subfamily. In terms of assembly, homodimer.

It is found in the cytoplasm. It carries out the reaction tRNA(Pro) + L-proline + ATP = L-prolyl-tRNA(Pro) + AMP + diphosphate. Functionally, catalyzes the attachment of proline to tRNA(Pro) in a two-step reaction: proline is first activated by ATP to form Pro-AMP and then transferred to the acceptor end of tRNA(Pro). As ProRS can inadvertently accommodate and process non-cognate amino acids such as alanine and cysteine, to avoid such errors it has two additional distinct editing activities against alanine. One activity is designated as 'pretransfer' editing and involves the tRNA(Pro)-independent hydrolysis of activated Ala-AMP. The other activity is designated 'posttransfer' editing and involves deacylation of mischarged Ala-tRNA(Pro). The misacylated Cys-tRNA(Pro) is not edited by ProRS. This is Proline--tRNA ligase from Syntrophus aciditrophicus (strain SB).